Here is a 513-residue protein sequence, read N- to C-terminus: Cytochrome P450 86A1 (513 aa).

A helical membrane pass occupies residues 7 to 27; the sequence is ILTGYAVAALSVYALWFYFLS. Position 456 (Cys-456) interacts with heme.

Belongs to the cytochrome P450 family. The cofactor is heme. Expressed in roots.

It localises to the membrane. The catalysed reaction is an omega-methyl-long-chain fatty acid + reduced [NADPH--hemoprotein reductase] + O2 = an omega-hydroxy-long-chain fatty acid + oxidized [NADPH--hemoprotein reductase] + H2O + H(+). Catalyzes the omega-hydroxylation of various fatty acids (FA). Acts on saturated and unsaturated fatty acids with chain lengths from C12 to C18 but not on hexadecane. The sequence is that of Cytochrome P450 86A1 (CYP86A1) from Arabidopsis thaliana (Mouse-ear cress).